The chain runs to 765 residues: MKTPWKVLLGLLGLAALITIITVPVVLLNKGNDAAADSRRTYTLTDYLKNTFRVKFYSLRWVSDHDYLYKQDNNILLFNAEYGNSSIFLENSTFDEFEHSINDYSVSPDGQFILLEYNYVKQWRHSYTASYDIYDLNKRQLITEEKIPNNTQWITWSPEGHKLAYVWKNDVYVKNEPNSSSHRITWTGEENAIYNGIADWVYEEEIFSAYSALWWSPKGTFLAYAQFNDTQVPLIEYSFYSDESLQYPMTMRIPYPKAGAANPTVKLFVIKTDNLNPNTNATSVEITPPAAMLTGDYYLCDVTWANEERISLQWLRRIQNYSVMDIRDYNNSTGKWISSAAQEHIEMSTTGWVGRFRPAEPHFTSDGRNFYKIISNEDGYKHICRFQIDKKDCTFITKGAWEVIGIEALTTDYLYYISNEYKGMPGGRNLYKIQLNDYTKVACLSCELKPERCQYYSVSFSKEAKYYQLRCSGPGLPLYTLHRSSNDEELRVLEDNSALDKMLQEVQMPSKKLDFIILNETKFWYQMILPPHFDTSKKYPLLIDVYAGPCSQKADAIFRLNWATYLASTENIIVASFDGRGSGYQGDKIMHAVNRRLGTFEVEDQIEAARQFSKMGFVDDKRIAIWGWSYGGYVTSMVLGAGSGVFKCGIAVAPVSRWEYYDSVYTERYMGLPTPQDNLDYYKNSTVMSRAENFKQVEYLLIHGTADDNVHFQQSAQISKALVDAGVDFQAMWYTDEDHGIASGPAHQHIYTHMSHFIKQCFSLP.

Residues 1–6 (MKTPWK) lie on the Cytoplasmic side of the membrane. The chain crosses the membrane as a helical; Signal-anchor for type II membrane protein span at residues 7–29 (VLLGLLGLAALITIITVPVVLLN). Over 30-765 (KGNDAAADSR…HFIKQCFSLP (736 aa)) the chain is Extracellular. 9 N-linked (GlcNAc...) asparagine glycosylation sites follow: N84, N91, N149, N178, N228, N280, N320, N330, and N331. Disulfide bonds link C384/C393, C443/C446, and C453/C471. N519 carries N-linked (GlcNAc...) asparagine glycosylation. S629 acts as the Charge relay system in catalysis. The cysteines at positions 648 and 761 are disulfide-linked. A glycan (N-linked (GlcNAc...) asparagine) is linked at N684. Catalysis depends on charge relay system residues D707 and H739.

Belongs to the peptidase S9B family. DPPIV subfamily. Monomer. Homodimer. Heterodimer with Seprase (FAP). Requires homodimerization for optimal dipeptidyl peptidase activity and T-cell costimulation. Found in a membrane raft complex, at least composed of BCL10, CARD11, DPP4 and IKBKB. Associates with collagen. Interacts with PTPRC; the interaction is enhanced in an interleukin-12-dependent manner in activated lymphocytes. Interacts (extracellular domain) with ADA; does not inhibit its dipeptidyl peptidase activity. Interacts with CAV1 (via the N-terminus); the interaction is direct. Interacts (via cytoplasmic tail) with CARD11 (via PDZ domain); its homodimerization is necessary for interaction with CARD11. Interacts with IGF2R; the interaction is direct. Interacts with GPC3. The soluble form (Dipeptidyl peptidase 4 soluble form also named SDPP) derives from the membrane form (Dipeptidyl peptidase 4 membrane form also named MDPP) by proteolytic processing. Post-translationally, N- and O-Glycosylated. In terms of processing, phosphorylated. Mannose 6-phosphate residues in the carbohydrate moiety are necessary for interaction with IGF2R in activated T-cells. Mannose 6-phosphorylation is induced during T-cell activation.

The protein resides in the secreted. It localises to the cell membrane. The protein localises to the apical cell membrane. It is found in the cell projection. Its subcellular location is the invadopodium membrane. The protein resides in the lamellipodium membrane. It localises to the cell junction. The protein localises to the membrane raft. It carries out the reaction Release of an N-terminal dipeptide, Xaa-Yaa-|-Zaa-, from a polypeptide, preferentially when Yaa is Pro, provided Zaa is neither Pro nor hydroxyproline.. Its activity is regulated as follows. Inhibited by GPC3 and diprotin A. Cell surface glycoprotein receptor involved in the costimulatory signal essential for T-cell receptor (TCR)-mediated T-cell activation. Acts as a positive regulator of T-cell coactivation, by binding at least ADA, CAV1, IGF2R, and PTPRC. Its binding to CAV1 and CARD11 induces T-cell proliferation and NF-kappa-B activation in a T-cell receptor/CD3-dependent manner. Its interaction with ADA also regulates lymphocyte-epithelial cell adhesion. In association with FAP is involved in the pericellular proteolysis of the extracellular matrix (ECM), the migration and invasion of endothelial cells into the ECM. May be involved in the promotion of lymphatic endothelial cells adhesion, migration and tube formation. When overexpressed, enhanced cell proliferation, a process inhibited by GPC3. Also acts as a serine exopeptidase with a dipeptidyl peptidase activity that regulates various physiological processes by cleaving peptides in the circulation, including many chemokines, mitogenic growth factors, neuropeptides and peptide hormones. Removes N-terminal dipeptides sequentially from polypeptides having unsubstituted N-termini provided that the penultimate residue is proline. The polypeptide is Dipeptidyl peptidase 4 (DPP4) (Felis catus (Cat)).